The chain runs to 137 residues: Nucleoside diphosphate kinase (137 aa).

K9, F57, R85, T91, R102, and N112 together coordinate ATP. The active-site Pros-phosphohistidine intermediate is the H115.

This sequence belongs to the NDK family. As to quaternary structure, homotetramer. Mg(2+) is required as a cofactor.

The protein resides in the cytoplasm. It catalyses the reaction a 2'-deoxyribonucleoside 5'-diphosphate + ATP = a 2'-deoxyribonucleoside 5'-triphosphate + ADP. The enzyme catalyses a ribonucleoside 5'-diphosphate + ATP = a ribonucleoside 5'-triphosphate + ADP. Major role in the synthesis of nucleoside triphosphates other than ATP. The ATP gamma phosphate is transferred to the NDP beta phosphate via a ping-pong mechanism, using a phosphorylated active-site intermediate. This is Nucleoside diphosphate kinase from Geotalea daltonii (strain DSM 22248 / JCM 15807 / FRC-32) (Geobacter daltonii).